A 590-amino-acid chain; its full sequence is UvrABC system protein C (590 aa).

A GIY-YIG domain is found at 14-91 (DQPGCYLMKD…IKKYDPKYNV (78 aa)). A UVR domain is found at 196–231 (QQIKKELTEKMQEAAEQLEFERAKELRDQIAYIDST).

The protein belongs to the UvrC family. As to quaternary structure, interacts with UvrB in an incision complex.

It is found in the cytoplasm. The UvrABC repair system catalyzes the recognition and processing of DNA lesions. UvrC both incises the 5' and 3' sides of the lesion. The N-terminal half is responsible for the 3' incision and the C-terminal half is responsible for the 5' incision. This is UvrABC system protein C from Bacillus pumilus (strain SAFR-032).